Here is a 911-residue protein sequence, read N- to C-terminus: Nitrate reductase [NADH], clone PBNBR1405 (911 aa).

Residues 1–68 (MATSVDNRHY…RFDSSDDEDE (68 aa)) form a disordered region. Basic and acidic residues predominate over residues 49 to 62 (KSVDKTTKEDRFDS). Mo-molybdopterin is bound at residue C191. Residues 539–614 (SKMYSMSEVR…LEDYRIGELI (76 aa)) form the Cytochrome b5 heme-binding domain. Heme-binding residues include H574 and H597. In terms of domain architecture, FAD-binding FR-type spans 654-766 (REKVPVKLIE…KGPLGHIEYQ (113 aa)). FAD contacts are provided by residues 706–709 (RAYT), 723–727 (VIKVY), F728, F735, 740–742 (LMS), and T793.

It belongs to the nitrate reductase family. In terms of assembly, homodimer. FAD serves as cofactor. The cofactor is heme. It depends on Mo-molybdopterin as a cofactor.

The catalysed reaction is nitrite + NAD(+) + H2O = nitrate + NADH + H(+). Nitrate reductase is a key enzyme involved in the first step of nitrate assimilation in plants, fungi and bacteria. The chain is Nitrate reductase [NADH], clone PBNBR1405 (NIA1) from Brassica napus (Rape).